A 274-amino-acid polypeptide reads, in one-letter code: Diaminopimelate epimerase (274 aa).

N11, Q44, and N64 together coordinate substrate. The active-site Proton donor is the C73. Residues 74-75, N157, N190, and 208-209 each bind substrate; these read GN and ER. C217 (proton acceptor) is an active-site residue. 218–219 is a binding site for substrate; the sequence is GS.

The protein belongs to the diaminopimelate epimerase family. In terms of assembly, homodimer.

It localises to the cytoplasm. The enzyme catalyses (2S,6S)-2,6-diaminopimelate = meso-2,6-diaminopimelate. It functions in the pathway amino-acid biosynthesis; L-lysine biosynthesis via DAP pathway; DL-2,6-diaminopimelate from LL-2,6-diaminopimelate: step 1/1. Functionally, catalyzes the stereoinversion of LL-2,6-diaminopimelate (L,L-DAP) to meso-diaminopimelate (meso-DAP), a precursor of L-lysine and an essential component of the bacterial peptidoglycan. The chain is Diaminopimelate epimerase from Escherichia coli O6:H1 (strain CFT073 / ATCC 700928 / UPEC).